The sequence spans 661 residues: Period circadian protein (661 aa).

A compositionally biased stretch (low complexity) spans 1–34; it reads KVSDSAYSNSCSNSQSQRSGSSKSRLSGSHSSGS. Residues 1-151 form a disordered region; the sequence is KVSDSAYSNS…RVEGVAKSEA (151 aa). The Nuclear localization signal signature appears at 53–66; that stretch reads KRNKDKSRKKKKNK. The span at 53–66 shows a compositional bias: basic residues; it reads KRNKDKSRKKKKNK. Residues 108–120 show a composition bias toward basic and acidic residues; the sequence is ELQDQQHGEDHSE. PAS domains follow at residues 223-358 and 376-482; these read DSFC…ATPI and FAIR…RVFQ. The segment at 582-661 is disordered; the sequence is TNTSIAGTGG…VTLTESLLNK (80 aa). The segment covering 588–634 has biased composition (gly residues); sequence GTGGTGTGTGTGTGTGTGTGTGTGTGTGTGTGTGTGTGTGTGTGNGT. Repeat copies occupy residues 591 to 592, 593 to 594, 595 to 596, 597 to 598, 599 to 600, 601 to 602, 603 to 604, 605 to 606, 607 to 608, 609 to 610, 611 to 612, 613 to 614, 615 to 616, 617 to 618, 619 to 620, 621 to 622, 623 to 624, 625 to 626, 627 to 628, 629 to 630, 631 to 632, and 633 to 634. Positions 591 to 638 are 24 X 2 AA approximate tandem repeats of G-[TN]; it reads GTGTGTGTGTGTGTGTGTGTGTGTGTGTGTGTGTGTGTGTGNGTNSGT. Residues 635–636 form a 23; approximate repeat; it reads NS. The segment covering 635 to 646 has biased composition (low complexity); that stretch reads NSGTTSSSRGGS. Repeat unit 24 spans residues 637-638; that stretch reads GT.

As to quaternary structure, forms a heterodimer with timeless (TIM); the complex then translocates into the nucleus. In terms of processing, phosphorylated with a circadian rhythmicity, probably by the double-time protein (dbt). Phosphorylation could be implicated in the stability of per monomer and in the formation of heterodimer per-tim.

Its subcellular location is the nucleus. It localises to the cytoplasm. The protein localises to the perinuclear region. Functionally, essential for biological clock functions. Determines the period length of circadian and ultradian rhythms; an increase in PER dosage leads to shortened circadian rhythms and a decrease leads to lengthened circadian rhythms. Essential for the circadian rhythmicity of locomotor activity, eclosion behavior, and for the rhythmic component of the male courtship song that originates in the thoracic nervous system. The biological cycle depends on the rhythmic formation and nuclear localization of the TIM-PER complex. Light induces the degradation of TIM, which promotes elimination of PER. Nuclear activity of the heterodimer coordinatively regulates PER and TIM transcription through a negative feedback loop. Behaves as a negative element in circadian transcriptional loop. Does not appear to bind DNA, suggesting indirect transcriptional inhibition. This Drosophila sechellia (Fruit fly) protein is Period circadian protein (per).